The primary structure comprises 314 residues: DNA-directed RNA polymerase subunit alpha (314 aa).

The segment at 1–227 (MTYFQIECVE…SLFYPLTNLN (227 aa)) is alpha N-terminal domain (alpha-NTD). The interval 239–314 (EEEINQVLIE…LPKEKNIQNT (76 aa)) is alpha C-terminal domain (alpha-CTD).

It belongs to the RNA polymerase alpha chain family. In terms of assembly, in plastids the minimal PEP RNA polymerase catalytic core is composed of four subunits: alpha, beta, beta', and beta''. When a (nuclear-encoded) sigma factor is associated with the core the holoenzyme is formed, which can initiate transcription.

It localises to the plastid. It is found in the chloroplast. The catalysed reaction is RNA(n) + a ribonucleoside 5'-triphosphate = RNA(n+1) + diphosphate. Its function is as follows. DNA-dependent RNA polymerase catalyzes the transcription of DNA into RNA using the four ribonucleoside triphosphates as substrates. This chain is DNA-directed RNA polymerase subunit alpha, found in Gracilaria tenuistipitata var. liui (Red alga).